Reading from the N-terminus, the 671-residue chain is UvrABC system protein B (671 aa).

The region spanning 25-412 is the Helicase ATP-binding domain; sequence EGIDAGLAHQ…AGRIVEQVVR (388 aa). An ATP-binding site is contributed by 38–45; that stretch reads GVTGSGKT. A Beta-hairpin motif is present at residues 91–114; sequence YYDYYQPEAYVPSSDTFIEKDASI. The region spanning 429–582 is the Helicase C-terminal domain; it reads QVDDLLSEIH…QIAFNLEHGI (154 aa). The disordered stretch occupies residues 601 to 625; the sequence is PGSRSKKRKGMAKAAEESARYENEL. The segment covering 614–625 has biased composition (basic and acidic residues); sequence AAEESARYENEL. The UVR domain maps to 632–667; that stretch reads NKRIRQLEEKMYQLARDLEFEAAAQMRDEIGKLRER.

The protein belongs to the UvrB family. Forms a heterotetramer with UvrA during the search for lesions. Interacts with UvrC in an incision complex.

Its subcellular location is the cytoplasm. In terms of biological role, the UvrABC repair system catalyzes the recognition and processing of DNA lesions. A damage recognition complex composed of 2 UvrA and 2 UvrB subunits scans DNA for abnormalities. Upon binding of the UvrA(2)B(2) complex to a putative damaged site, the DNA wraps around one UvrB monomer. DNA wrap is dependent on ATP binding by UvrB and probably causes local melting of the DNA helix, facilitating insertion of UvrB beta-hairpin between the DNA strands. Then UvrB probes one DNA strand for the presence of a lesion. If a lesion is found the UvrA subunits dissociate and the UvrB-DNA preincision complex is formed. This complex is subsequently bound by UvrC and the second UvrB is released. If no lesion is found, the DNA wraps around the other UvrB subunit that will check the other stand for damage. The chain is UvrABC system protein B from Pseudomonas syringae pv. tomato (strain ATCC BAA-871 / DC3000).